A 419-amino-acid polypeptide reads, in one-letter code: UDP-N-acetylglucosamine 1-carboxyvinyltransferase (419 aa).

22-23 (KN) lines the phosphoenolpyruvate pocket. A UDP-N-acetyl-alpha-D-glucosamine-binding site is contributed by Arg93. Cys117 (proton donor) is an active-site residue. Cys117 carries the post-translational modification 2-(S-cysteinyl)pyruvic acid O-phosphothioketal. Residues Asp307 and Ile329 each coordinate UDP-N-acetyl-alpha-D-glucosamine.

Belongs to the EPSP synthase family. MurA subfamily.

It is found in the cytoplasm. The catalysed reaction is phosphoenolpyruvate + UDP-N-acetyl-alpha-D-glucosamine = UDP-N-acetyl-3-O-(1-carboxyvinyl)-alpha-D-glucosamine + phosphate. The protein operates within cell wall biogenesis; peptidoglycan biosynthesis. Functionally, cell wall formation. Adds enolpyruvyl to UDP-N-acetylglucosamine. This is UDP-N-acetylglucosamine 1-carboxyvinyltransferase from Shewanella woodyi (strain ATCC 51908 / MS32).